The chain runs to 381 residues: Acetylornithine deacetylase (381 aa).

Histidine 79 provides a ligand contact to Zn(2+). Aspartate 81 is an active-site residue. A Zn(2+)-binding site is contributed by aspartate 111. The active site involves glutamate 143. The Zn(2+) site is built by glutamate 144, glutamate 168, and histidine 354.

Belongs to the peptidase M20A family. ArgE subfamily. As to quaternary structure, homodimer. Zn(2+) serves as cofactor. Co(2+) is required as a cofactor. The cofactor is glutathione.

It localises to the cytoplasm. It carries out the reaction N(2)-acetyl-L-ornithine + H2O = L-ornithine + acetate. Its pathway is amino-acid biosynthesis; L-arginine biosynthesis; L-ornithine from N(2)-acetyl-L-ornithine (linear): step 1/1. Functionally, catalyzes the hydrolysis of the amide bond of N(2)-acetylated L-amino acids. Cleaves the acetyl group from N-acetyl-L-ornithine to form L-ornithine, an intermediate in L-arginine biosynthesis pathway, and a branchpoint in the synthesis of polyamines. This chain is Acetylornithine deacetylase, found in Buchnera aphidicola subsp. Acyrthosiphon pisum (strain Tuc7).